Here is a 227-residue protein sequence, read N- to C-terminus: Cytochrome c oxidase subunit 2 (227 aa).

Residues 1–14 (MAYPFQLGFQDATS) are Mitochondrial intermembrane-facing. The helical transmembrane segment at 15–45 (PIMEELLHFHDHTLMIVFLISSLVLYVISAM) threads the bilayer. Over 46–59 (LTTNLTHTSTMDAQ) the chain is Mitochondrial matrix. Residues 60 to 87 (EVETIWTILPAIILITIALPSLRILYMM) form a helical membrane-spanning segment. Over 88–227 (DEINNPAMTI…YFEKWSVSML (140 aa)) the chain is Mitochondrial intermembrane. Residues His161, Cys196, Glu198, Cys200, His204, and Met207 each contribute to the Cu cation site. A Mg(2+)-binding site is contributed by Glu198. Residue Tyr218 is modified to Phosphotyrosine.

It belongs to the cytochrome c oxidase subunit 2 family. As to quaternary structure, component of the cytochrome c oxidase (complex IV, CIV), a multisubunit enzyme composed of 14 subunits. The complex is composed of a catalytic core of 3 subunits MT-CO1, MT-CO2 and MT-CO3, encoded in the mitochondrial DNA, and 11 supernumerary subunits COX4I, COX5A, COX5B, COX6A, COX6B, COX6C, COX7A, COX7B, COX7C, COX8 and NDUFA4, which are encoded in the nuclear genome. The complex exists as a monomer or a dimer and forms supercomplexes (SCs) in the inner mitochondrial membrane with NADH-ubiquinone oxidoreductase (complex I, CI) and ubiquinol-cytochrome c oxidoreductase (cytochrome b-c1 complex, complex III, CIII), resulting in different assemblies (supercomplex SCI(1)III(2)IV(1) and megacomplex MCI(2)III(2)IV(2)). Found in a complex with TMEM177, COA6, COX18, COX20, SCO1 and SCO2. Interacts with TMEM177 in a COX20-dependent manner. Interacts with COX20. Interacts with COX16. The cofactor is Cu cation.

It is found in the mitochondrion inner membrane. The catalysed reaction is 4 Fe(II)-[cytochrome c] + O2 + 8 H(+)(in) = 4 Fe(III)-[cytochrome c] + 2 H2O + 4 H(+)(out). Functionally, component of the cytochrome c oxidase, the last enzyme in the mitochondrial electron transport chain which drives oxidative phosphorylation. The respiratory chain contains 3 multisubunit complexes succinate dehydrogenase (complex II, CII), ubiquinol-cytochrome c oxidoreductase (cytochrome b-c1 complex, complex III, CIII) and cytochrome c oxidase (complex IV, CIV), that cooperate to transfer electrons derived from NADH and succinate to molecular oxygen, creating an electrochemical gradient over the inner membrane that drives transmembrane transport and the ATP synthase. Cytochrome c oxidase is the component of the respiratory chain that catalyzes the reduction of oxygen to water. Electrons originating from reduced cytochrome c in the intermembrane space (IMS) are transferred via the dinuclear copper A center (CU(A)) of subunit 2 and heme A of subunit 1 to the active site in subunit 1, a binuclear center (BNC) formed by heme A3 and copper B (CU(B)). The BNC reduces molecular oxygen to 2 water molecules using 4 electrons from cytochrome c in the IMS and 4 protons from the mitochondrial matrix. The protein is Cytochrome c oxidase subunit 2 (MT-CO2) of Macrotus californicus (Californian leaf-nosed bat).